We begin with the raw amino-acid sequence, 644 residues long: Phosphatidylinositol polyphosphate 5-phosphatase type IV (644 aa).

A disordered region spans residues 1–193; it reads MPSKAENLRP…RLPSLLPPRP (193 aa). A run of 8 repeats spans residues 10–13, 15–18, 28–31, 39–42, 55–58, 69–71, 72–74, and 75–78. A 13 X 4 AA repeats of P-X-X-P region spans residues 10-242; the sequence is PSEPAPQPPE…SLGPGRPRSP (233 aa). Basic and acidic residues predominate over residues 78–90; it reads PRLERALSLDDKG. S99 carries the post-translational modification Phosphoserine. The span at 107–118 shows a compositional bias: polar residues; it reads NGTSPSRGSVQS. Copy 9 of the repeat occupies 121–124; it reads PGAP. The segment covering 152–163 has biased composition (low complexity); that stretch reads GSPSSGGNPLSG. 4 tandem repeats follow at residues 169–172, 183–185, 190–193, and 236–239. Residues S241 and S256 each carry the phosphoserine modification. C641 carries the cysteine methyl ester modification. C641 carries the S-farnesyl cysteine lipid modification. Residues 642–644 constitute a propeptide, removed in mature form; that stretch reads SVS.

This sequence belongs to the inositol 1,4,5-trisphosphate 5-phosphatase type IV family. In terms of assembly, interacts (when prenylated) with PDE6D; this is important for normal location in cilia. In terms of tissue distribution, detected in brain, heart, pancreas, testis and spleen.

The protein resides in the cytoplasm. It localises to the cytoskeleton. The protein localises to the cilium axoneme. Its subcellular location is the golgi apparatus. It is found in the golgi stack membrane. The protein resides in the cell membrane. It localises to the cell projection. The protein localises to the ruffle. Its subcellular location is the nucleus. The catalysed reaction is a 1,2-diacyl-sn-glycero-3-phospho-(1D-myo-inositol-4,5-bisphosphate) + H2O = a 1,2-diacyl-sn-glycero-3-phospho-(1D-myo-inositol 4-phosphate) + phosphate. The enzyme catalyses a 1,2-diacyl-sn-glycero-3-phospho-(1D-myo-inositol-3,4,5-trisphosphate) + H2O = a 1,2-diacyl-sn-glycero-3-phospho-(1D-myo-inositol-3,4-bisphosphate) + phosphate. It carries out the reaction a 1,2-diacyl-sn-glycero-3-phospho-(1D-myo-inositol-3,5-bisphosphate) + H2O = a 1,2-diacyl-sn-glycero-3-phospho-(1D-myo-inositol-3-phosphate) + phosphate. Its activity is regulated as follows. Active in the presence of octyl-glucoside or Triton X-100, but completely inhibited by CTAB. Its function is as follows. Phosphatidylinositol (PtdIns) phosphatase that specifically hydrolyzes the 5-phosphate of phosphatidylinositol-3,4,5-trisphosphate (PtdIns(3,4,5)P3), phosphatidylinositol 4,5-bisphosphate (PtdIns(4,5)P2) and phosphatidylinositol 3,5-bisphosphate (PtdIns(3,5)P2). Specific for lipid substrates, inactive towards water soluble inositol phosphates. Plays an essential role in the primary cilium by controlling ciliary growth and phosphoinositide 3-kinase (PI3K) signaling and stability. This chain is Phosphatidylinositol polyphosphate 5-phosphatase type IV (INPP5E), found in Homo sapiens (Human).